The sequence spans 431 residues: GTPase Obg (431 aa).

Positions 1 to 158 constitute an Obg domain; the sequence is MFVDQVKINV…REIRLELKVL (158 aa). A disordered region spans residues 125-145; that stretch reads GNIHFASPKNPAPEIAENGEP. Residues 159-335 enclose the OBG-type G domain; sequence ADVGLVGFPS…LLQRTADMLA (177 aa). GTP is bound by residues 165–172, 190–194, 212–215, 282–285, and 316–318; these read GFPSVGKS, FTTLV, DLPG, NKMD, and SAL. Mg(2+) is bound by residues serine 172 and threonine 192. The OCT domain maps to 353–431; that stretch reads YNFQPEAEFT…IDDFTFEYMA (79 aa).

The protein belongs to the TRAFAC class OBG-HflX-like GTPase superfamily. OBG GTPase family. In terms of assembly, monomer. Mg(2+) serves as cofactor.

It localises to the cytoplasm. Its function is as follows. An essential GTPase which binds GTP, GDP and possibly (p)ppGpp with moderate affinity, with high nucleotide exchange rates and a fairly low GTP hydrolysis rate. Plays a role in control of the cell cycle, stress response, ribosome biogenesis and in those bacteria that undergo differentiation, in morphogenesis control. The chain is GTPase Obg from Levilactobacillus brevis (strain ATCC 367 / BCRC 12310 / CIP 105137 / JCM 1170 / LMG 11437 / NCIMB 947 / NCTC 947) (Lactobacillus brevis).